The sequence spans 260 residues: Carbonic anhydrase 2 (260 aa).

An Alpha-carbonic anhydrase domain is found at 3-259 (HGWGYADHNG…LKDRKVCASF (257 aa)). The active-site Proton donor/acceptor is the His64. Zn(2+)-binding residues include His94, His96, and His119. 198–199 (TT) is a substrate binding site.

Belongs to the alpha-carbonic anhydrase family. Zn(2+) is required as a cofactor.

Its subcellular location is the cytoplasm. The enzyme catalyses hydrogencarbonate + H(+) = CO2 + H2O. Catalyzes the reversible hydration of carbon dioxide. The chain is Carbonic anhydrase 2 (ca2) from Pseudaspius hakonensis (Big-scaled redfin).